A 312-amino-acid polypeptide reads, in one-letter code: tRNA dimethylallyltransferase (312 aa).

15-22 (GPTAAGKS) serves as a coordination point for ATP. Substrate is bound at residue 17–22 (TAAGKS). The tract at residues 40 to 43 (DSMQ) is interaction with substrate tRNA.

Belongs to the IPP transferase family. As to quaternary structure, monomer. The cofactor is Mg(2+).

It catalyses the reaction adenosine(37) in tRNA + dimethylallyl diphosphate = N(6)-dimethylallyladenosine(37) in tRNA + diphosphate. In terms of biological role, catalyzes the transfer of a dimethylallyl group onto the adenine at position 37 in tRNAs that read codons beginning with uridine, leading to the formation of N6-(dimethylallyl)adenosine (i(6)A). The polypeptide is tRNA dimethylallyltransferase (Streptomyces griseus subsp. griseus (strain JCM 4626 / CBS 651.72 / NBRC 13350 / KCC S-0626 / ISP 5235)).